Consider the following 306-residue polypeptide: Glutathione transport system permease protein GsiC (306 aa).

The Cytoplasmic portion of the chain corresponds to 1-8; it reads MLNYVIKR. The chain crosses the membrane as a helical span at residues 9 to 29; sequence LLGLIPTLFIVSVLVFLFVHM. The Periplasmic segment spans residues 30–102; sequence LPGDPARLIA…SRFMPTLWLT (73 aa). Residues 95–292 form the ABC transmembrane type-1 domain; the sequence is FMPTLWLTIT…LEFILINLVV (198 aa). The chain crosses the membrane as a helical span at residues 103-123; the sequence is ITSMVWAVIFGMAAGIIAAVW. Residues 124-134 are Cytoplasmic-facing; sequence RNRWPDRLSMT. The chain crosses the membrane as a helical span at residues 135–155; it reads IAVSGISFPAFALGMLLIQVF. Residues 156–168 are Periplasmic-facing; that stretch reads SVELGWLPTVGAD. The helical transmembrane segment at 169–189 threads the bilayer; the sequence is SWQHYILSSLTLGAAVAAVMA. Over 190–228 the chain is Cytoplasmic; that stretch reads RFTRASFVDVLSEDYMRTARAKGVSETWVVLKHGLRNAM. The helical transmembrane segment at 229–249 threads the bilayer; the sequence is IPVVTMMGLQFGFLLGGSIVV. The Periplasmic portion of the chain corresponds to 250-277; the sequence is EKVFNWPGLGRLLVDSVEMRDYPVIQAE. Residues 278–298 traverse the membrane as a helical segment; that stretch reads ILLFSLEFILINLVVDVLYAA. Residues 299–306 are Cytoplasmic-facing; sequence INPAIRYK.

Belongs to the binding-protein-dependent transport system permease family. In terms of assembly, the complex is composed of two ATP-binding proteins (GsiA), two transmembrane proteins (GsiC and GsiD) and a solute-binding protein (GsiB).

It is found in the cell inner membrane. Its function is as follows. Part of the ABC transporter complex GsiABCD involved in glutathione import. Probably responsible for the translocation of the substrate across the membrane. This is Glutathione transport system permease protein GsiC from Shigella boydii serotype 4 (strain Sb227).